We begin with the raw amino-acid sequence, 188 residues long: Elongation factor P (188 aa).

Residue lysine 34 is modified to N6-(3,6-diaminohexanoyl)-5-hydroxylysine.

It belongs to the elongation factor P family. May be beta-lysylated on the epsilon-amino group of Lys-34 by the combined action of EpmA and EpmB, and then hydroxylated on the C5 position of the same residue by EpmC (if this protein is present). Lysylation is critical for the stimulatory effect of EF-P on peptide-bond formation. The lysylation moiety may extend toward the peptidyltransferase center and stabilize the terminal 3-CCA end of the tRNA. Hydroxylation of the C5 position on Lys-34 may allow additional potential stabilizing hydrogen-bond interactions with the P-tRNA.

The protein resides in the cytoplasm. Its pathway is protein biosynthesis; polypeptide chain elongation. Involved in peptide bond synthesis. Alleviates ribosome stalling that occurs when 3 or more consecutive Pro residues or the sequence PPG is present in a protein, possibly by augmenting the peptidyl transferase activity of the ribosome. Modification of Lys-34 is required for alleviation. In Xanthomonas campestris pv. campestris (strain B100), this protein is Elongation factor P.